A 205-amino-acid polypeptide reads, in one-letter code: SCO2-like protein RC0895 (205 aa).

The Cu cation site is built by Cys-82, Cys-86, and His-172.

The protein belongs to the SCO1/2 family.

The sequence is that of SCO2-like protein RC0895 from Rickettsia conorii (strain ATCC VR-613 / Malish 7).